A 455-amino-acid chain; its full sequence is Phosphoglucosamine mutase (455 aa).

Ser104 functions as the Phosphoserine intermediate in the catalytic mechanism. Residues Ser104, Asp253, Asp255, and Asp257 each contribute to the Mg(2+) site. Ser104 is subject to Phosphoserine.

Belongs to the phosphohexose mutase family. The cofactor is Mg(2+). In terms of processing, activated by phosphorylation.

The catalysed reaction is alpha-D-glucosamine 1-phosphate = D-glucosamine 6-phosphate. Catalyzes the conversion of glucosamine-6-phosphate to glucosamine-1-phosphate. This Psychrobacter arcticus (strain DSM 17307 / VKM B-2377 / 273-4) protein is Phosphoglucosamine mutase.